Consider the following 108-residue polypeptide: Tetrahydromethanopterin S-methyltransferase subunit B (108 aa).

The chain crosses the membrane as a helical span at residues 79 to 99; the sequence is GMFFGFWVTMAILVLVTILAV.

Belongs to the MtrB family. As to quaternary structure, the complex is composed of 8 subunits; MtrA, MtrB, MtrC, MtrD, MtrE, MtrF, MtrG and MtrH.

The protein resides in the cell membrane. The enzyme catalyses 5-methyl-5,6,7,8-tetrahydromethanopterin + coenzyme M + 2 Na(+)(in) = 5,6,7,8-tetrahydromethanopterin + methyl-coenzyme M + 2 Na(+)(out). It participates in one-carbon metabolism; methanogenesis from CO(2); methyl-coenzyme M from 5,10-methylene-5,6,7,8-tetrahydromethanopterin: step 2/2. In terms of biological role, part of a complex that catalyzes the formation of methyl-coenzyme M and tetrahydromethanopterin from coenzyme M and methyl-tetrahydromethanopterin. This is an energy-conserving, sodium-ion translocating step. The protein is Tetrahydromethanopterin S-methyltransferase subunit B of Methanococcus maripaludis (strain C7 / ATCC BAA-1331).